The chain runs to 398 residues: MSKTIAINAGSSSLKWQLYQMPEEAVLAQGIIERIGLKDSISTVKYDGKKEEQILDIHDHTEAVKILLNDLIHFGIIAAYDEITGVGHRVVAGGELFKESVVVNDKVLEQIEELSVLAPLHNPGAAAGIRAFRDILPDITSVCVFDTSFHTSMAKHTYLYPIPQKYYTDYKVRKYGAHGTSHKYVAQEAAKMLGRPLEELKLITAHIGNGVSITANYHGKSVDTSMGFTPLAGPMMGTRSGDIDPAIIPYLIEQDPELKDAADVVNMLNKKSGLSGVSGISSDMRDIEAGLQEDNPDAVLAYNIFIDRIKKCIGQYFAVLNGADALVFTAGMGENAPLMRQDVIGGLTWFGMDIDPEKNVFGYRGDISTPESKVKVLVISTDEELCIARDVERLKNTK.

N8 contacts Mg(2+). K15 serves as a coordination point for ATP. Position 89 (R89) interacts with substrate. D146 (proton donor/acceptor) is an active-site residue. ATP is bound by residues H206 to G210, D283 to R285, and G331 to N335. Position 383 (E383) interacts with Mg(2+).

This sequence belongs to the acetokinase family. Homodimer. It depends on Mg(2+) as a cofactor. Mn(2+) serves as cofactor.

It is found in the cytoplasm. It catalyses the reaction acetate + ATP = acetyl phosphate + ADP. It participates in metabolic intermediate biosynthesis; acetyl-CoA biosynthesis; acetyl-CoA from acetate: step 1/2. Its function is as follows. Catalyzes the formation of acetyl phosphate from acetate and ATP. Can also catalyze the reverse reaction. The polypeptide is Acetate kinase (Streptococcus pyogenes serotype M1).